The following is a 311-amino-acid chain: Glycosyltransferase 6 domain-containing protein 1 (311 aa).

Residues 1-5 (MKAKR) lie on the Cytoplasmic side of the membrane. The helical; Signal-anchor for type II membrane protein transmembrane segment at 6–26 (RILLQLLTFCLFLLLLAKIHF) threads the bilayer. Residues 27–311 (RNHQEEELLL…KIAHHPIDTL (285 aa)) are Lumenal-facing. N-linked (GlcNAc...) asparagine glycosylation occurs at N77. Residues 85–90 (FAVGSL), 176–178 (NIN), and 198–201 (HPWW) each bind substrate. The active-site Nucleophile is E266.

The protein belongs to the glycosyltransferase 6 family. The cofactor is Mn(2+).

It localises to the membrane. The protein is Glycosyltransferase 6 domain-containing protein 1 (Glt6d1) of Mus musculus (Mouse).